The sequence spans 686 residues: DNA ligase 2 (686 aa).

Residues 37 to 41 (DDEYD), 86 to 87 (SL), and Glu121 contribute to the NAD(+) site. The active-site N6-AMP-lysine intermediate is Lys123. Residues Arg144, Glu179, Lys295, and Lys319 each coordinate NAD(+). Zn(2+)-binding residues include Cys413, Cys416, Cys431, and Cys436. Positions 593 to 681 (VRGEQLAGLN…GVQLPGVQAS (89 aa)) constitute a BRCT domain.

This sequence belongs to the NAD-dependent DNA ligase family. LigA subfamily. The cofactor is Mg(2+). Requires Mn(2+) as cofactor.

The enzyme catalyses NAD(+) + (deoxyribonucleotide)n-3'-hydroxyl + 5'-phospho-(deoxyribonucleotide)m = (deoxyribonucleotide)n+m + AMP + beta-nicotinamide D-nucleotide.. Its function is as follows. DNA ligase that catalyzes the formation of phosphodiester linkages between 5'-phosphoryl and 3'-hydroxyl groups in double-stranded DNA using NAD as a coenzyme and as the energy source for the reaction. It is essential for DNA replication and repair of damaged DNA. The polypeptide is DNA ligase 2 (Deinococcus deserti (strain DSM 17065 / CIP 109153 / LMG 22923 / VCD115)).